A 638-amino-acid polypeptide reads, in one-letter code: 1-deoxy-D-xylulose-5-phosphate synthase (638 aa).

Thiamine diphosphate-binding positions include His-71 and 112 to 114 (SHA). Asp-144 is a Mg(2+) binding site. Thiamine diphosphate is bound by residues 145-146 (GA), Asn-173, Tyr-284, and Glu-365. Asn-173 contributes to the Mg(2+) binding site.

It belongs to the transketolase family. DXPS subfamily. In terms of assembly, homodimer. The cofactor is Mg(2+). Thiamine diphosphate serves as cofactor.

The enzyme catalyses D-glyceraldehyde 3-phosphate + pyruvate + H(+) = 1-deoxy-D-xylulose 5-phosphate + CO2. It functions in the pathway metabolic intermediate biosynthesis; 1-deoxy-D-xylulose 5-phosphate biosynthesis; 1-deoxy-D-xylulose 5-phosphate from D-glyceraldehyde 3-phosphate and pyruvate: step 1/1. Catalyzes the acyloin condensation reaction between C atoms 2 and 3 of pyruvate and glyceraldehyde 3-phosphate to yield 1-deoxy-D-xylulose-5-phosphate (DXP). The polypeptide is 1-deoxy-D-xylulose-5-phosphate synthase (Mycobacterium sp. (strain JLS)).